Reading from the N-terminus, the 474-residue chain is Aspartyl/glutamyl-tRNA(Asn/Gln) amidotransferase subunit B (474 aa).

The protein belongs to the GatB/GatE family. GatB subfamily. As to quaternary structure, heterotrimer of A, B and C subunits.

It carries out the reaction L-glutamyl-tRNA(Gln) + L-glutamine + ATP + H2O = L-glutaminyl-tRNA(Gln) + L-glutamate + ADP + phosphate + H(+). The catalysed reaction is L-aspartyl-tRNA(Asn) + L-glutamine + ATP + H2O = L-asparaginyl-tRNA(Asn) + L-glutamate + ADP + phosphate + 2 H(+). Allows the formation of correctly charged Asn-tRNA(Asn) or Gln-tRNA(Gln) through the transamidation of misacylated Asp-tRNA(Asn) or Glu-tRNA(Gln) in organisms which lack either or both of asparaginyl-tRNA or glutaminyl-tRNA synthetases. The reaction takes place in the presence of glutamine and ATP through an activated phospho-Asp-tRNA(Asn) or phospho-Glu-tRNA(Gln). The sequence is that of Aspartyl/glutamyl-tRNA(Asn/Gln) amidotransferase subunit B from Methanospirillum hungatei JF-1 (strain ATCC 27890 / DSM 864 / NBRC 100397 / JF-1).